Here is a 261-residue protein sequence, read N- to C-terminus: Succinate dehydrogenase iron-sulfur subunit (261 aa).

Residues 1-23 (MAELRLPPNSVVKKGKEHKEQEE) form a disordered region. A 2Fe-2S ferredoxin-type domain is found at 28–119 (RKVKIYRYDP…DIKIYPLPHM (92 aa)). 3 residues coordinate [2Fe-2S] cluster: Cys80, Cys85, and Cys100. In terms of domain architecture, 4Fe-4S ferredoxin-type spans 161–191 (GREKLDGLYECILCACCSTSCPSYWWNGDKY). Positions 171, 174, and 177 each coordinate [4Fe-4S] cluster. Position 181 (Cys181) interacts with [3Fe-4S] cluster. Trp186 is a binding site for a ubiquinone. [3Fe-4S] cluster is bound by residues Cys228 and Cys234. Cys238 serves as a coordination point for [4Fe-4S] cluster.

This sequence belongs to the succinate dehydrogenase/fumarate reductase iron-sulfur protein family. As to quaternary structure, part of an enzyme complex containing four subunits: a flavoprotein, an iron-sulfur, cytochrome b-556, and a hydrophobic anchor protein. [2Fe-2S] cluster serves as cofactor. Requires [3Fe-4S] cluster as cofactor. It depends on [4Fe-4S] cluster as a cofactor.

The catalysed reaction is a quinone + succinate = fumarate + a quinol. It functions in the pathway carbohydrate metabolism; tricarboxylic acid cycle; fumarate from succinate (bacterial route): step 1/1. The chain is Succinate dehydrogenase iron-sulfur subunit (sdhB) from Rickettsia felis (strain ATCC VR-1525 / URRWXCal2) (Rickettsia azadi).